The chain runs to 4042 residues: Polyketide synthase-nonribosomal peptide synthetase ffsA (4042 aa).

The 437-residue stretch at 17–453 (REPIAIVGSA…GANAHAILEA (437 aa)) folds into the Ketosynthase family 3 (KS3) domain. Catalysis depends on for beta-ketoacyl synthase activity residues Cys190, His330, and His373. The malonyl-CoA:ACP transacylase (MAT) domain stretch occupies residues 561–878 (VFTGQGAQWK…TGLLSRGRPD (318 aa)). Residues 950–1083 (HEILGTKCPD…GKLKVTLGEP (134 aa)) form an N-terminal hotdog fold region. The segment at 950 to 1249 (HEILGTKCPD…LQTKPLANAT (300 aa)) is dehydratase (DH) domain. One can recognise a PKS/mFAS DH domain in the interval 950 to 1251 (HEILGTKCPD…TKPLANATAA (302 aa)). His982 serves as the catalytic Proton acceptor; for dehydratase activity. Residues 1098–1251 (MIDVDSERFY…TKPLANATAA (154 aa)) are C-terminal hotdog fold. Asp1158 serves as the catalytic Proton donor; for dehydratase activity. Residues 1390 to 1613 (DNLLNDFYVH…VDDHVNFLRD (224 aa)) are methyltransferase (MT) domain. Positions 2116–2289 (TYWLVGLSGG…AGSAINIGTI (174 aa)) are ketoreductase (KR)domain. Residues 2399-2476 (EAREIIEESL…EMVAAAQEKL (78 aa)) form the Carrier 1 domain. Ser2436 is subject to O-(pantetheine 4'-phosphoryl)serine. The tract at residues 2515-2601 (EKAEYADFDD…FDSDSDNASI (87 aa)) is disordered. The segment covering 2520–2532 (ADFDDENEEEGIP) has biased composition (acidic residues). The tract at residues 2629 to 3061 (RTLPMSFGQT…ISRPSLYDPQ (433 aa)) is condensation. The adenylation stretch occupies residues 3089-3486 (EIVKAHGSKV…EDGHLVLEGR (398 aa)). In terms of domain architecture, Carrier 2 spans 3607–3684 (RDSTEKLKDI…AMARMVDPTA (78 aa)). Ser3644 carries the post-translational modification O-(pantetheine 4'-phosphoryl)serine. The interval 3750–3971 (ITGATGFLGK…DFVDVEKVAT (222 aa)) is reductase-like domain.

It in the C-terminal section; belongs to the NRP synthetase family.

It participates in mycotoxin biosynthesis. Functionally, hybrid PKS-NRPS synthetase; part of the gene cluster that mediates the biosynthesis of the cytotoxic leucine-containing cytochalasans, including aspochalasin C, aspochalasin E, TMC-169, flavichalasine F, aspergillin PZ, aspochalasin M and flavichalasine G. The first step in the pathway is catalyzed by the hybrid PKS-NRPS ffsA that utilizes 8 units of malonyl-CoA to iteratively assemble the octaketide chain before addition of L-leucine by the C-terminal NRPS modules. Because ffsA lacks a designated enoylreductase (ER) domain, the required activity is provided the enoyl reductase fssC. The methyltransferase (MT) domain of ffsA catalyzes the alpha-methylation at C10 and C14 using S-adenosyl-L-methionine as the methyl-donating cosubstrate. Reduction by the hydrolyase ffsE, followed by dehydration and intra-molecular Diels-Alder cyclization by the Diels-Alderase ffsF then yield the required isoindolone-fused macrocycle. A number of oxidative steps catalyzed by the tailoring cytochrome P450 monooxygenase ffsD, the FAD-linked oxidoreductase ffsJ and the short-chain dehydrogenase/reductase ffsI, are further required to afford the final products. The sequence is that of Polyketide synthase-nonribosomal peptide synthetase ffsA from Aspergillus flavipes.